Here is a 283-residue protein sequence, read N- to C-terminus: Protease HtpX (283 aa).

Transmembrane regions (helical) follow at residues 4 to 24 (IALF…ILSV) and 33 to 53 (GGIL…SLFM). H139 contributes to the Zn(2+) binding site. E140 is a catalytic residue. H143 contributes to the Zn(2+) binding site. The next 2 membrane-spanning stretches (helical) occupy residues 147 to 167 (GDMV…IFLS) and 192 to 212 (FLVS…IAMW). E218 lines the Zn(2+) pocket.

The protein belongs to the peptidase M48B family. It depends on Zn(2+) as a cofactor.

It is found in the cell inner membrane. The polypeptide is Protease HtpX (Glaesserella parasuis serovar 5 (strain SH0165) (Haemophilus parasuis)).